We begin with the raw amino-acid sequence, 633 residues long: Guanylate-binding protein 6 (633 aa).

The tract at residues 1 to 310 (MESGPKMLAP…EAVNSGAVPC (310 aa)) is GTPase domain (Globular). The region spanning 35-277 (SQPVVVVAIV…FSSYIFTHAR (243 aa)) is the GB1/RHD3-type G domain. Residues 45 to 52 (GLYRTGKS), 67 to 69 (LGS), and 97 to 101 (DTEGL) each bind GTP.

This sequence belongs to the TRAFAC class dynamin-like GTPase superfamily. GB1/RHD3 GTPase family. GB1 subfamily.

The protein resides in the cytoplasmic vesicle. It carries out the reaction GTP + H2O = GDP + phosphate + H(+). Interferon (IFN)-inducible GTPase that plays important roles in innate immunity against a diverse range of bacterial, viral and protozoan pathogens, such as bacterial pathogens Listeria monocytogenes and Mycobacterium bovis BCG as well as the protozoan pathogen Toxoplasma gondii. Confers protection to several pathogens, including the bacterial pathogens Listeria monocytogenes and Mycobacterium bovis BCG as well as the protozoan pathogen Toxoplasma gondii. This Pongo abelii (Sumatran orangutan) protein is Guanylate-binding protein 6 (GBP6).